Consider the following 278-residue polypeptide: Manganese import system permease protein ScaB (278 aa).

8 helical membrane passes run 18 to 38, 40 to 60, 61 to 81, 136 to 156, 172 to 192, 194 to 214, 220 to 240, and 244 to 264; these read ALIT…FIIL, GMSL…ALSF, ILGI…SILI, VTIG…RPLL, VKLY…TAMQ, VGTI…YLYA, MMLL…FIGY, and IAVG…SFFI.

The protein belongs to the ABC-3 integral membrane protein family.

The protein localises to the cell membrane. Functionally, part of an ABC transporter complex involved in manganese import. The sequence is that of Manganese import system permease protein ScaB from Streptococcus pneumoniae.